The sequence spans 300 residues: Ribosomal protein L11 methyltransferase (300 aa).

S-adenosyl-L-methionine is bound by residues Thr-152, Gly-173, Asp-195, and Asn-234.

It belongs to the methyltransferase superfamily. PrmA family.

The protein resides in the cytoplasm. It carries out the reaction L-lysyl-[protein] + 3 S-adenosyl-L-methionine = N(6),N(6),N(6)-trimethyl-L-lysyl-[protein] + 3 S-adenosyl-L-homocysteine + 3 H(+). In terms of biological role, methylates ribosomal protein L11. This Paraburkholderia phymatum (strain DSM 17167 / CIP 108236 / LMG 21445 / STM815) (Burkholderia phymatum) protein is Ribosomal protein L11 methyltransferase.